We begin with the raw amino-acid sequence, 59 residues long: UPF0434 protein HDEF_0234 (59 aa).

The protein belongs to the UPF0434 family.

This Hamiltonella defensa subsp. Acyrthosiphon pisum (strain 5AT) protein is UPF0434 protein HDEF_0234.